The following is a 106-amino-acid chain: Large ribosomal subunit protein uL24 (106 aa).

The protein belongs to the universal ribosomal protein uL24 family. In terms of assembly, part of the 50S ribosomal subunit.

One of two assembly initiator proteins, it binds directly to the 5'-end of the 23S rRNA, where it nucleates assembly of the 50S subunit. Its function is as follows. One of the proteins that surrounds the polypeptide exit tunnel on the outside of the subunit. This is Large ribosomal subunit protein uL24 from Desulforudis audaxviator (strain MP104C).